A 600-amino-acid polypeptide reads, in one-letter code: DDB1- and CUL4-associated factor 15 (600 aa).

A disordered region spans residues 1-30; that stretch reads MAPSSKSERNSGAGSGGGGPGGAGGKRAAG. The segment covering 13-27 has biased composition (gly residues); that stretch reads AGSGGGGPGGAGGKR. Ser50 bears the Phosphoserine mark. Cys193, Cys196, Cys211, and His214 together coordinate Zn(2+). Residues Phe231 and 234–235 contribute to the E7820 site; that span reads AF. A compositionally biased stretch (pro residues) spans 280–295; sequence PASPPEPQSPELPPAL. Residues 280-316 form a disordered region; that stretch reads PASPPEPQSPELPPALPSFCPEAAPARSSGSPEPSPA. Residues Ser310 and Ser314 each carry the phosphoserine modification.

Component of the DCX(DCAF15) complex, also named CLR4(DCAF15) complex, composed of DCAF15, DDB1, cullin-4 (CUL4A or CUL4B), DDA1 and RBX1.

It participates in protein modification; protein ubiquitination. Its activity is regulated as follows. Aryl sulfonamide anticancer drugs change the substrate specificity of DCAF15 by acting as a molecular glue that promotes binding between DCAF15 and weak affinity interactors, such as RBM39. Substrate-recognition component of the DCX(DCAF15) complex, a cullin-4-RING E3 ubiquitin-protein ligase complex that mediates ubiquitination and degradation of target proteins. The DCX(DCAF15) complex acts as a regulator of the natural killer (NK) cells effector functions, possibly by mediating ubiquitination and degradation of cohesin subunits SMC1A and SMC3. May play a role in the activation of antigen-presenting cells (APC) and their interaction with NK cells. In terms of biological role, binding of aryl sulfonamide anticancer drugs, such as indisulam (E7070) or E7820, change the substrate specificity of the DCX(DCAF15) complex, leading to promote ubiquitination and degradation of splicing factor RBM39. RBM39 degradation results in splicing defects and death in cancer cell lines. Aryl sulfonamide anticancer drugs change the substrate specificity of DCAF15 by acting as a molecular glue that promotes binding between DCAF15 and weak affinity interactor RBM39. Aryl sulfonamide anticancer drugs also promote ubiquitination and degradation of RBM23 and PRPF39. The polypeptide is DDB1- and CUL4-associated factor 15 (Homo sapiens (Human)).